We begin with the raw amino-acid sequence, 1063 residues long: Unconventional myosin-Ic (1063 aa).

N-acetylmethionine is present on methionine 1. Threonine 10 bears the Phosphoserine mark. The 685-residue stretch at 47–731 folds into the Myosin motor domain; that stretch reads GVQDFVLLEN…TLFATEDSLE (685 aa). ATP-binding positions include asparagine 88, tyrosine 96, 139-148, and 192-196; these read SGESGAGKTE and NDNSS. Lysine 383 is subject to N6-methyllysine. At serine 408 the chain carries Phosphoserine. At lysine 486 the chain carries N6-acetyllysine. Residue serine 536 is modified to Phosphoserine. Residues 608 to 630 are actin-binding; that stretch reads LLQLVEILRSKEPAYIRCIKPND. IQ domains are found at residues 734–757 and 758–786; these read RQSL…FLRV and KRSA…AAQT. Phosphoserine is present on residues serine 864 and serine 1041. Residues 885–1059 form the TH1 domain; that stretch reads KDNYPQSVPR…NGHLAVVAPR (175 aa).

It belongs to the TRAFAC class myosin-kinesin ATPase superfamily. Myosin family. As to quaternary structure, interacts (via its IQ motifs) with CABP1 and CIB1; the interaction with CABP1 and CIB1 is calcium-dependent. Interacts (via tail domain) with PLEKHB1 (via PH domain); the interaction is not affected by the presence or absence of calcium and CALM. Interacts with POLR1A. Interacts with POLR2A. Component of the B-WICH complex, at least composed of SMARCA5/SNF2H, BAZ1B/WSTF, SF3B1, DEK, MYO1C, ERCC6, MYBBP1A and DDX21. Interacts (via its IQ motifs) with CALM; this precludes interaction with YWHAB. Interacts with YWHAB; this precludes interaction with CALM. Interacts with RPS6. Interacts with actin. Interacts with LLPH. Interacts with GLUT4. Interacts (via its IQ motifs) with SH3BGRL3; the interaction is dependent on calcium and takes place at membrane ruffles. Post-translationally, isoform 2 contains a N-acetylmethionine at position 1. In terms of tissue distribution, isoform 3 is expressed in small intestine, pancreas, brain, kidney, skin, heart muscle, testis, striated muscle, spleen, liver and lung (at protein level). Expressed in brain, testis, adrenal glands, thymus, spleen, kidney, lung, heart, cochlea and vestibule. Expressed in sensory hair cells of the inner ear. Expressed in adipocytes.

The protein localises to the cytoplasm. It is found in the nucleus. Its subcellular location is the cell cortex. The protein resides in the cell projection. It localises to the stereocilium membrane. The protein localises to the cytoplasmic vesicle. It is found in the ruffle membrane. Its subcellular location is the nucleolus. The protein resides in the nucleoplasm. Its function is as follows. Myosins are actin-based motor molecules with ATPase activity. Unconventional myosins serve in intracellular movements. Their highly divergent tails bind to membranous compartments, which then are moved relative to actin filaments. Involved in glucose transporter recycling in response to insulin by regulating movement of intracellular GLUT4-containing vesicles to the plasma membrane. Component of the hair cell's (the sensory cells of the inner ear) adaptation-motor complex. Acts as a mediator of adaptation of mechanoelectrical transduction in stereocilia of vestibular hair cells. Binds phosphoinositides and links the actin cytoskeleton to cellular membranes. In terms of biological role, involved in regulation of transcription. Associated with transcriptional active ribosomal genes. Appears to cooperate with the WICH chromatin-remodeling complex to facilitate transcription. Necessary for the formation of the first phosphodiester bond during transcription initiation. The polypeptide is Unconventional myosin-Ic (Myo1c) (Mus musculus (Mouse)).